The chain runs to 1048 residues: MEGRSAAAETFVWVNNASAHSQSVAKAKYEFLFGRSEGKAPDTSDHGGSTLLPPNVTNEFPEYGTMEEGGEGLRASLEFDGEALPCHPQEQQGVQPLTGCHSGLDSVTEGPKDVREAPSQSHLKEQSLQPIDSLISALKATEARIISGTLQATKVLDQDAVSSFSVQQVEKELDTASRKTQRVNKTLPAGQKNLPEIPLSAEVTTEESFYLSIQKDLTALLTGDTQAEISQIMNNGRKGAVCVQEPSCPLASLGSSAVTCHSAGSVGFLKEQRSALGREHPGGCDRSSSMGRPGRVKHVEFQGVEILWTGGDKRETQHPIDFETSLQRTASPDSKESSKVPRHLISSAGLCNSSSLTENVWDESWKAPSERPGTSSGTFSPVRLDESGEDEVFLQENKQHLEKTPKPERDRERISEQEEHVKGEDEDILGPGYTEDSTDVYSSQFETILDNTSLYYSAESLETLYSEPDSYFSFEMPLTPMIQQRIKEGGQFLERTSGGGHQDILSVSADGGIVMGYSSGVTNGLNDASDSIYTKGTPEIAFWGSNAGVKTTRLEAHSEMGSTEILEKETPENLSNGTSSNVEAAKRLAKRLYQLDRFKRSDVAKHLGKNNEFSKLVAEEYLKFFDFTGMTLDQSLRYFFKAFSLVGETQERERVLIHFSNRYFYCNPDTIASQDGVHCLTCAIMLLNTDLHGHVNIGKKMTCQEFIANLQGVNEGVDFSKDLLKALYNSIKNEKLEWAVDDEEKKKSPSESTEEKANGTHPKTISRIGSTTNPFLDIPHDPNAAVYKSGFLARKIHADMDGKKTPRGKRGWKTFYAVLKGTVLYLQKDEYKPEKALSEEDLKNAVSVHHALASKATDYEKKPNVFKLKTADWRVLLFQTQSPEEMQGWINKINCVAAVFSAPPFPAAIGSQKKFSRPLLPATTTKLSQEEQLKSHESKLKQITTELAEHRSYPPDKKVKAKDVDEYKLKDHYLEFEKTRYEMYVSILKEGGKELLSNDESEAAGLKKSHSSPSLNPDTSPITAKVKRNVSERKDHRPETPSIKQKVT.

Residues 36-45 (SEGKAPDTSD) are compositionally biased toward basic and acidic residues. The segment at 36–57 (SEGKAPDTSDHGGSTLLPPNVT) is disordered. S76 bears the Phosphoserine mark. Disordered stretches follow at residues 104-126 (LDSV…LKEQ), 310-342 (GGDK…KVPR), 364-383 (SWKA…SPVR), and 395-434 (QENK…PGYT). The segment covering 311 to 321 (GDKRETQHPID) has biased composition (basic and acidic residues). The span at 397 to 423 (NKQHLEKTPKPERDRERISEQEEHVKG) shows a compositional bias: basic and acidic residues. The SEC7 domain occupies 534–734 (TKGTPEIAFW…KALYNSIKNE (201 aa)). Over residues 741–758 (DDEEKKKSPSESTEEKAN) the composition is skewed to basic and acidic residues. Residues 741 to 769 (DDEEKKKSPSESTEEKANGTHPKTISRIG) form a disordered region. A Phosphoserine modification is found at S770. In terms of domain architecture, PH spans 785–898 (AVYKSGFLAR…WINKINCVAA (114 aa)). A coiled-coil region spans residues 922 to 952 (ATTTKLSQEEQLKSHESKLKQITTELAEHRS). Residues 999-1048 (DESEAAGLKKSHSSPSLNPDTSPITAKVKRNVSERKDHRPETPSIKQKVT) form a disordered region. S1009, S1011, S1012, S1014, and S1020 each carry phosphoserine. Over residues 1011 to 1022 (SSPSLNPDTSPI) the composition is skewed to polar residues. Over residues 1029-1039 (NVSERKDHRPE) the composition is skewed to basic and acidic residues.

As to expression, isoform 2 is expressed in epididymis (at protein level).

The protein resides in the cell membrane. It localises to the cell projection. Its subcellular location is the ruffle membrane. The protein localises to the postsynaptic density. Functionally, guanine nucleotide exchange factor for ARF6. The sequence is that of PH and SEC7 domain-containing protein 3 (PSD3) from Homo sapiens (Human).